The chain runs to 430 residues: Adenylosuccinate synthetase (430 aa).

Residues glycine 13–lysine 19 and glycine 41–threonine 43 contribute to the GTP site. Catalysis depends on aspartate 14, which acts as the Proton acceptor. Mg(2+) contacts are provided by aspartate 14 and glycine 41. IMP-binding positions include aspartate 14 to lysine 17, asparagine 39 to histidine 42, threonine 130, arginine 144, glutamine 225, threonine 240, and arginine 304. Residue histidine 42 is the Proton donor of the active site. Residue alanine 300–arginine 306 participates in substrate binding. Residues arginine 306, lysine 332–aspartate 334, and serine 414–glycine 416 each bind GTP.

Belongs to the adenylosuccinate synthetase family. As to quaternary structure, homodimer. Requires Mg(2+) as cofactor.

The protein localises to the cytoplasm. The catalysed reaction is IMP + L-aspartate + GTP = N(6)-(1,2-dicarboxyethyl)-AMP + GDP + phosphate + 2 H(+). It participates in purine metabolism; AMP biosynthesis via de novo pathway; AMP from IMP: step 1/2. In terms of biological role, plays an important role in the de novo pathway of purine nucleotide biosynthesis. Catalyzes the first committed step in the biosynthesis of AMP from IMP. The chain is Adenylosuccinate synthetase from Pseudomonas syringae pv. syringae (strain B728a).